The sequence spans 415 residues: Serine hydroxymethyltransferase 2 (415 aa).

(6S)-5,6,7,8-tetrahydrofolate is bound by residues Leu121 and Gly125–Leu127. At Lys229 the chain carries N6-(pyridoxal phosphate)lysine.

This sequence belongs to the SHMT family. Homodimer. Pyridoxal 5'-phosphate is required as a cofactor.

The protein localises to the cytoplasm. The enzyme catalyses (6R)-5,10-methylene-5,6,7,8-tetrahydrofolate + glycine + H2O = (6S)-5,6,7,8-tetrahydrofolate + L-serine. It functions in the pathway one-carbon metabolism; tetrahydrofolate interconversion. Its pathway is amino-acid biosynthesis; glycine biosynthesis; glycine from L-serine: step 1/1. In terms of biological role, catalyzes the reversible interconversion of serine and glycine with tetrahydrofolate (THF) serving as the one-carbon carrier. This reaction serves as the major source of one-carbon groups required for the biosynthesis of purines, thymidylate, methionine, and other important biomolecules. Also exhibits THF-independent aldolase activity toward beta-hydroxyamino acids, producing glycine and aldehydes, via a retro-aldol mechanism. The polypeptide is Serine hydroxymethyltransferase 2 (Bordetella bronchiseptica (strain ATCC BAA-588 / NCTC 13252 / RB50) (Alcaligenes bronchisepticus)).